The chain runs to 491 residues: Pentatricopeptide repeat-containing protein At5g27460 (491 aa).

10 PPR repeats span residues 69–99 (SLSE…MENQ), 105–139 (SVYD…SVSM), 142–176 (AKSA…GFLV), 177–211 (TPHP…KIPR), 212–246 (NVLS…KSVE), 248–278 (GWSS…AEKM), 283–313 (NRLG…SKSV), 318–348 (SCVN…WEAQ), 353–387 (DVRV…GGTP), and 388–426 (NYKT…HWRP).

This sequence belongs to the PPR family. P subfamily.

The polypeptide is Pentatricopeptide repeat-containing protein At5g27460 (Arabidopsis thaliana (Mouse-ear cress)).